The sequence spans 264 residues: Probable amino-acid-binding protein YxeM (264 aa).

Positions M1 to A20 are cleaved as a signal peptide. C21 is lipidated: N-palmitoyl cysteine. A lipid anchor (S-diacylglycerol cysteine) is attached at C21.

This sequence belongs to the bacterial solute-binding protein 3 family. As to quaternary structure, the complex is composed of two ATP-binding proteins (YxeO), two transmembrane proteins (YxeN) and a solute-binding protein (YxeM).

It is found in the cell membrane. The protein localises to the membrane raft. Its function is as follows. Probably part of the ABC transporter complex YxeMNO that could be involved in amino-acid import. May transport S-methylcysteine. The protein is Probable amino-acid-binding protein YxeM (yxeM) of Bacillus subtilis (strain 168).